The sequence spans 427 residues: Probable fatty acid methyltransferase Rv3720 (427 aa).

S-adenosyl-L-methionine is bound by residues 167-168 (YT), 202-210 (LLDVGCGWG), and 227-232 (TLSAEQ).

This sequence belongs to the CFA/CMAS family.

May be a S-adenosylmethionine-dependent methyltransferase involved in fatty acid metabolism. The protein is Probable fatty acid methyltransferase Rv3720 of Mycobacterium tuberculosis (strain ATCC 25618 / H37Rv).